The following is a 161-amino-acid chain: Protein YzcX (161 aa).

In Escherichia coli (strain K12), this protein is Protein YzcX (yzcX).